The following is a 508-amino-acid chain: Photosystem II CP47 reaction center protein (508 aa).

6 consecutive transmembrane segments (helical) span residues 21–36, 101–115, 140–156, 203–218, 237–252, and 457–472; these read SVHI…WAGS, IVFS…IWHW, GIHL…FGAF, IAAG…FHLS, VLSS…AFVV, and SFAL…HGAR.

It belongs to the PsbB/PsbC family. PsbB subfamily. PSII is composed of 1 copy each of membrane proteins PsbA, PsbB, PsbC, PsbD, PsbE, PsbF, PsbH, PsbI, PsbJ, PsbK, PsbL, PsbM, PsbT, PsbX, PsbY, PsbZ, Psb30/Ycf12, at least 3 peripheral proteins of the oxygen-evolving complex and a large number of cofactors. It forms dimeric complexes. Requires Binds multiple chlorophylls. PSII binds additional chlorophylls, carotenoids and specific lipids. as cofactor.

It is found in the plastid. It localises to the chloroplast thylakoid membrane. Its function is as follows. One of the components of the core complex of photosystem II (PSII). It binds chlorophyll and helps catalyze the primary light-induced photochemical processes of PSII. PSII is a light-driven water:plastoquinone oxidoreductase, using light energy to abstract electrons from H(2)O, generating O(2) and a proton gradient subsequently used for ATP formation. The protein is Photosystem II CP47 reaction center protein of Arabis hirsuta (Hairy rock-cress).